A 97-amino-acid polypeptide reads, in one-letter code: Putative septation protein SpoVG (97 aa).

Belongs to the SpoVG family.

Essential for sporulation. Interferes with or is a negative regulator of the pathway leading to asymmetric septation. The polypeptide is Putative septation protein SpoVG (Bacillus cereus (strain 03BB102)).